The following is a 157-amino-acid chain: Glutathione peroxidase (157 aa).

The active site involves Cys35.

This sequence belongs to the glutathione peroxidase family.

It catalyses the reaction 2 glutathione + H2O2 = glutathione disulfide + 2 H2O. This chain is Glutathione peroxidase (gpo), found in Lactococcus lactis subsp. cremoris (strain MG1363).